Reading from the N-terminus, the 491-residue chain is Phosphoethanolamine N-methyltransferase 1 (491 aa).

The residue at position 2 (A2) is an N-acetylalanine. Positions 61, 66, 82, 107, 108, and 126 each coordinate S-adenosyl-L-homocysteine. 5 residues coordinate phosphocholine: S159, S164, G165, R169, and Y176. N-methylethanolamine phosphate is bound by residues 245-246 (QY) and Y254. Y254 is a phosphocholine binding site. The S-adenosyl-L-homocysteine site is built by V263, S264, G290, D312, D338, C339, and R355. 5 residues coordinate phosphocholine: Y386, Y400, R404, Y406, and K472. N-methylethanolamine phosphate contacts are provided by residues Y386, Y400, 404–406 (RGY), and K472.

It belongs to the class I-like SAM-binding methyltransferase superfamily. PEAMT family. Highly expressed in the meristem and elongation zones of the root. Expressed in differentiated root epidermal cells. Highly expressed in leaf vasculature.

The protein localises to the cytoplasm. The enzyme catalyses phosphoethanolamine + S-adenosyl-L-methionine = N-methylethanolamine phosphate + S-adenosyl-L-homocysteine + H(+). It catalyses the reaction N-methylethanolamine phosphate + S-adenosyl-L-methionine = N,N-dimethylethanolamine phosphate + S-adenosyl-L-homocysteine + H(+). It carries out the reaction N,N-dimethylethanolamine phosphate + S-adenosyl-L-methionine = phosphocholine + S-adenosyl-L-homocysteine + H(+). Its pathway is phospholipid metabolism; phosphatidylcholine biosynthesis; phosphocholine from phosphoethanolamine: step 1/1. In terms of biological role, involved in phosphocholine biosynthesis. Catalyzes the N-methylation of phosphoethanolamine, phosphomonomethylethanolamine and phosphodimethylethanolamine, the three methylation steps required to convert phosphoethanolamine to phosphocholine (PC). Required for root system development and epidermal cell integrity through its role in choline and phospholipid metabolism. In association with NMT3, regulates PC homeostasis, phase transition at the shoot apex, coordinated organ development, and fertility. In association with NMT3, involved in phosphatidylcholine biosynthesis and vascular development. In association with NMT2, involved in the production of phosphatidylcholine in roots, essential for root development. In association with NMT2 produce phosphocholine mainly for leaf growth maintenance. Contributes to the regulation of overall root zonation dynamics through reactive oxygen species (ROS) and auxin-regulated cell differentiation. Participates in root development of primary root elongation under salt stress conditions by balancing reactive oxygen species (ROS) production and distribution through abscisic acid (ABA) signaling. The sequence is that of Phosphoethanolamine N-methyltransferase 1 from Arabidopsis thaliana (Mouse-ear cress).